The following is a 376-amino-acid chain: Multiphosphoryl transfer protein (376 aa).

The PTS EIIA type-2 domain maps to phenylalanine 2–glutamate 142. Histidine 62 functions as the Tele-phosphohistidine intermediate; for EIIA activity in the catalytic mechanism. Histidine 62 bears the Phosphohistidine; by HPr mark. The m domain stretch occupies residues threonine 156–aspartate 284. Residues valine 285–glycine 375 enclose the HPr domain. Residue histidine 299 is the Pros-phosphohistidine intermediate; for HPr activity of the active site. Residue histidine 299 is modified to Phosphohistidine; by EI.

The protein localises to the cytoplasm. The phosphoenolpyruvate-dependent sugar phosphotransferase system (sugar PTS), a major carbohydrate active transport system, catalyzes the phosphorylation of incoming sugar substrates concomitantly with their translocation across the cell membrane. The enzyme II FruAB PTS system is involved in fructose transport. The sequence is that of Multiphosphoryl transfer protein (fruB) from Salmonella typhimurium (strain LT2 / SGSC1412 / ATCC 700720).